The following is a 640-amino-acid chain: UvrABC system protein C (640 aa).

One can recognise a GIY-YIG domain in the interval 22–101; the sequence is NDPGCYLMKD…IKSHQPYFNV (80 aa). The region spanning 211-246 is the UVR domain; it reads DELRILLEKQMISFSESLKFEEAGSVRDQLKGIDRL.

The protein belongs to the UvrC family. Interacts with UvrB in an incision complex.

It is found in the cytoplasm. In terms of biological role, the UvrABC repair system catalyzes the recognition and processing of DNA lesions. UvrC both incises the 5' and 3' sides of the lesion. The N-terminal half is responsible for the 3' incision and the C-terminal half is responsible for the 5' incision. This is UvrABC system protein C from Prochlorococcus marinus (strain NATL2A).